The following is a 274-amino-acid chain: 2,3,4,5-tetrahydropyridine-2,6-dicarboxylate N-succinyltransferase (274 aa).

Substrate contacts are provided by Arg-104 and Asp-141.

This sequence belongs to the transferase hexapeptide repeat family. As to quaternary structure, homotrimer.

It localises to the cytoplasm. It catalyses the reaction (S)-2,3,4,5-tetrahydrodipicolinate + succinyl-CoA + H2O = (S)-2-succinylamino-6-oxoheptanedioate + CoA. Its pathway is amino-acid biosynthesis; L-lysine biosynthesis via DAP pathway; LL-2,6-diaminopimelate from (S)-tetrahydrodipicolinate (succinylase route): step 1/3. The sequence is that of 2,3,4,5-tetrahydropyridine-2,6-dicarboxylate N-succinyltransferase from Shewanella baltica (strain OS155 / ATCC BAA-1091).